Reading from the N-terminus, the 142-residue chain is UPF0102 protein Synpcc7942_0312 (142 aa).

This sequence belongs to the UPF0102 family.

The chain is UPF0102 protein Synpcc7942_0312 from Synechococcus elongatus (strain ATCC 33912 / PCC 7942 / FACHB-805) (Anacystis nidulans R2).